Reading from the N-terminus, the 504-residue chain is D-alanine--D-alanyl carrier protein ligase (504 aa).

152–153 contacts ATP; that stretch reads TS. Asp-197 contributes to the D-alanine binding site. Position 292–297 (292–297) interacts with ATP; that stretch reads NTYGPT. Residue Val-301 participates in D-alanine binding. Residues Asp-383, 394 to 397, and Lys-492 contribute to the ATP site; that span reads YNGR. Lys-492 provides a ligand contact to D-alanine.

This sequence belongs to the ATP-dependent AMP-binding enzyme family. DltA subfamily.

It localises to the cytoplasm. The catalysed reaction is holo-[D-alanyl-carrier protein] + D-alanine + ATP = D-alanyl-[D-alanyl-carrier protein] + AMP + diphosphate. It participates in cell wall biogenesis; lipoteichoic acid biosynthesis. Its function is as follows. Catalyzes the first step in the D-alanylation of lipoteichoic acid (LTA), the activation of D-alanine and its transfer onto the D-alanyl carrier protein (Dcp) DltC. In an ATP-dependent two-step reaction, forms a high energy D-alanyl-AMP intermediate, followed by transfer of the D-alanyl residue as a thiol ester to the phosphopantheinyl prosthetic group of the Dcp. D-alanylation of LTA plays an important role in modulating the properties of the cell wall in Gram-positive bacteria, influencing the net charge of the cell wall. This Bacillus mycoides (strain KBAB4) (Bacillus weihenstephanensis) protein is D-alanine--D-alanyl carrier protein ligase.